The chain runs to 130 residues: Small ribosomal subunit protein uS8 (130 aa).

The protein belongs to the universal ribosomal protein uS8 family. In terms of assembly, part of the 30S ribosomal subunit. Contacts proteins S5 and S12.

One of the primary rRNA binding proteins, it binds directly to 16S rRNA central domain where it helps coordinate assembly of the platform of the 30S subunit. In Klebsiella pneumoniae subsp. pneumoniae (strain ATCC 700721 / MGH 78578), this protein is Small ribosomal subunit protein uS8.